The chain runs to 124 residues: Small ribosomal subunit protein uS13 (124 aa).

Over residues 94 to 117 (NLPVRGQRTRTNARTRKGPRKTVA) the composition is skewed to basic residues. Residues 94-124 (NLPVRGQRTRTNARTRKGPRKTVANKKIESK) are disordered.

The protein belongs to the universal ribosomal protein uS13 family. In terms of assembly, part of the 30S ribosomal subunit. Forms a loose heterodimer with protein S19. Forms two bridges to the 50S subunit in the 70S ribosome.

Functionally, located at the top of the head of the 30S subunit, it contacts several helices of the 16S rRNA. In the 70S ribosome it contacts the 23S rRNA (bridge B1a) and protein L5 of the 50S subunit (bridge B1b), connecting the 2 subunits; these bridges are implicated in subunit movement. Contacts the tRNAs in the A and P-sites. The protein is Small ribosomal subunit protein uS13 of Mycoplasma pneumoniae (strain ATCC 29342 / M129 / Subtype 1) (Mycoplasmoides pneumoniae).